We begin with the raw amino-acid sequence, 147 residues long: uncharacterized protein (147 aa).

In terms of domain architecture, HTH marR-type spans 1–137 (MRDNTIGSLI…LYELMTKVHK (137 aa)). Residues 53 to 76 (QMELAEKVTVTQGGISRMLTRLEK) constitute a DNA-binding region (H-T-H motif).

This is an uncharacterized protein from Bacillus anthracis.